The primary structure comprises 221 residues: Probable GTP-binding protein EngB (221 aa).

Positions 37 to 219 (QGIEIALAGR…RAAIVKLLRE (183 aa)) constitute an EngB-type G domain. GTP contacts are provided by residues 45–52 (GRSNVGKS), 72–76 (GRTQE), 97–100 (DMPG), 164–167 (TKTD), and 198–200 (TSS). Positions 52 and 74 each coordinate Mg(2+).

It belongs to the TRAFAC class TrmE-Era-EngA-EngB-Septin-like GTPase superfamily. EngB GTPase family. Requires Mg(2+) as cofactor.

Functionally, necessary for normal cell division and for the maintenance of normal septation. The protein is Probable GTP-binding protein EngB of Afipia carboxidovorans (strain ATCC 49405 / DSM 1227 / KCTC 32145 / OM5) (Oligotropha carboxidovorans).